We begin with the raw amino-acid sequence, 627 residues long: F-box only protein 21 (627 aa).

In terms of domain architecture, F-box spans 27–76 (PSCLVQLPGEVLEYILCSGSLTALDIGRVSSTCRRLREVCQSSGQVWKEQ).

Directly interacts with SKP1 and CUL1.

In terms of biological role, substrate-recognition component of the SCF (SKP1-CUL1-F-box protein)-type E3 ubiquitin ligase complex. The chain is F-box only protein 21 (Fbxo21) from Mus musculus (Mouse).